An 89-amino-acid polypeptide reads, in one-letter code: uncharacterized protein (89 aa).

2 consecutive transmembrane segments (helical) span residues 1–21 (MFLALTSIAIPAAIVIPISLI) and 28–48 (GISLTFSMTIGFVGLILTIAA).

It localises to the cell membrane. This is an uncharacterized protein from Methanocaldococcus jannaschii (strain ATCC 43067 / DSM 2661 / JAL-1 / JCM 10045 / NBRC 100440) (Methanococcus jannaschii).